We begin with the raw amino-acid sequence, 680 residues long: Probable inactive DNA (cytosine-5)-methyltransferase DRM3 (680 aa).

The disordered stretch occupies residues M1 to A24. Residues S45–Q86 form the UBA 1 domain. The interval K91–H113 is disordered. Residues S194 to I235 form the UBA 2 domain. One can recognise an SAM-dependent MTase DRM-type domain in the interval I336–L663.

This sequence belongs to the class I-like SAM-binding methyltransferase superfamily. DRM-methyltransferase family.

It localises to the nucleus. Its function is as follows. Involved in de novo DNA methylation. Involved in RNA-directed DNA methylation (RdDM). This Oryza sativa subsp. japonica (Rice) protein is Probable inactive DNA (cytosine-5)-methyltransferase DRM3.